We begin with the raw amino-acid sequence, 199 residues long: Holliday junction resolvase RecU (199 aa).

The Mg(2+) site is built by Thr82, Asp84, Glu97, and Gln116.

It belongs to the RecU family. Mg(2+) serves as cofactor.

The protein resides in the cytoplasm. It carries out the reaction Endonucleolytic cleavage at a junction such as a reciprocal single-stranded crossover between two homologous DNA duplexes (Holliday junction).. Its function is as follows. Endonuclease that resolves Holliday junction intermediates in genetic recombination. Cleaves mobile four-strand junctions by introducing symmetrical nicks in paired strands. Promotes annealing of linear ssDNA with homologous dsDNA. Required for DNA repair, homologous recombination and chromosome segregation. This is Holliday junction resolvase RecU from Streptococcus agalactiae serotype Ia (strain ATCC 27591 / A909 / CDC SS700).